Reading from the N-terminus, the 932-residue chain is Transcription initiation factor TFIID subunit 3 (932 aa).

Disordered stretches follow at residues 130–201 (PIVS…LSTK), 213–347 (REPL…PSAM), 403–465 (REPD…DNSW), and 480–579 (LGAP…PWRE). Residues 158–171 (LEEDDEMEEEEVIN) show a composition bias toward acidic residues. 4 positions are modified to phosphoserine: serine 183, serine 199, serine 229, and serine 243. Lysine 266 carries the post-translational modification N6-acetyllysine. Residues 266-283 (KSFTPKTKTKASSPGQKT) show a composition bias toward polar residues. Phosphoserine is present on residues serine 291, serine 297, and serine 301. Positions 408 to 423 (FEFSSGSESEGDTFTS) are enriched in low complexity. Positions 436 to 446 (KASTSSNNFTK) are enriched in polar residues. Low complexity predominate over residues 447–461 (SLATPLPLSSGTSSS). Threonine 502 carries the phosphothreonine modification. The segment covering 505 to 515 (PLHKGYEEKAK) has biased composition (basic and acidic residues). Residues 524–538 (KKLKKELKTKLKKKE) are compositionally biased toward basic residues. Basic and acidic residues predominate over residues 539 to 579 (KQRDRERERERNKERSKEKDKMREREKEKEAGKELKYPWRE). Lysine 582 participates in a covalent cross-link: Glycyl lysine isopeptide (Lys-Gly) (interchain with G-Cter in SUMO2). The segment at 607-657 (KDGIVRREREKHKDKKKDRERSKREKDKRERERLKEKNREDKIKAPPTQLV) is disordered. Residues 623–650 (KDRERSKREKDKRERERLKEKNREDKIK) show a composition bias toward basic and acidic residues. A Phosphoserine modification is found at serine 669. The disordered stretch occupies residues 681–746 (AFSPMLPEKL…EKEKEKHKHE (66 aa)). Residues 689–702 (KLFEEKEKPKEKER) are compositionally biased toward basic and acidic residues. Over residues 703–714 (KKDKKEKKKKKE) the composition is skewed to basic residues. Residues 715–740 (KEKEKEKKEREREKERREREKREKEK) show a composition bias toward basic and acidic residues. Lysine 749 participates in a covalent cross-link: Glycyl lysine isopeptide (Lys-Gly) (interchain with G-Cter in SUMO2). Serine 758 carries the phosphoserine modification. Position 779 is an N6-acetyllysine (lysine 779). Residues 867–917 (IWICPGCNKPDDGSPMIGCDDCDDWYHWPCVGIMAAPPEEMQWFCPKCANK) form a PHD-type zinc finger.

It belongs to the TAF3 family. Component of the TFIID basal transcription factor complex, composed of TATA-box-binding protein TBP, and a number of TBP-associated factors (TAFs), including TAF1, TAF2, TAF3, TAF4, TAF5, TAF6, TAF7, TAF8, TAF9, TAF10, TAF11, TAF12 and TAF13. Interacts with TAF10 via histone fold. Interacts with TAF13, TBP, SAP130 and GCN5L2. Interacts with TBPL2.

It localises to the nucleus. In terms of biological role, the TFIID basal transcription factor complex plays a major role in the initiation of RNA polymerase II (Pol II)-dependent transcription. TFIID recognizes and binds promoters with or without a TATA box via its subunit TBP, a TATA-box-binding protein, and promotes assembly of the pre-initiation complex (PIC). The TFIID complex consists of TBP and TBP-associated factors (TAFs), including TAF1, TAF2, TAF3, TAF4, TAF5, TAF6, TAF7, TAF8, TAF9, TAF10, TAF11, TAF12 and TAF13. The TFIID complex structure can be divided into 3 modules TFIID-A, TFIID-B, and TFIID-C. TAF3 forms the TFIID-A module together with TAF5 and TBP. Required in complex with TBPL2 for the differentiation of myoblasts into myocytes. The TAF3-TBPL2 complex replaces TFIID at specific promoters at an early stage in the differentiation process. The sequence is that of Transcription initiation factor TFIID subunit 3 (Taf3) from Mus musculus (Mouse).